A 319-amino-acid chain; its full sequence is MKPENKLPVLDLISAEMKTVVNTLQSDLPSWPATGTIAEQRQYYTLERRFWNAGAPEMATRAYMVPTKYGQVETRLFCPQPDSPATLFYLHGGGFILGNLDTHDRIMRLLASYSQCTVIGIDYPLSPEARFPQAIEEIVAACCYFHQQAEDYQINMSRIGFAGDSAGAMLTLASALWLRDKQIDCGKIAGVLLWYGLYGLRDSVTRRLLGGVWDGLTQQDLQMYEEAYLSNDADRESPYYCLFNNDLTREVPPCFIAGAEFDPLLDDSRLLYQTLAAHQQPCEFKLYPGTLHAFLHYSRMMKTADEALRDGAQFFTAQL.

Residues 91–93 (HGG) carry the Involved in the stabilization of the negatively charged intermediate by the formation of the oxyanion hole motif. Catalysis depends on residues serine 165, aspartate 262, and histidine 292.

This sequence belongs to the 'GDXG' lipolytic enzyme family. Homodimer. Interacts with MalT and MelA.

It localises to the cytoplasm. Functionally, displays esterase activity towards short chain fatty esters (acyl chain length of up to 8 carbons). Able to hydrolyze triacetylglycerol (triacetin) and tributyrylglycerol (tributyrin), but not trioleylglycerol (triolein) or cholesterol oleate. Negatively regulates MalT activity by antagonizing maltotriose binding. Inhibits MelA galactosidase activity. In Escherichia coli O139:H28 (strain E24377A / ETEC), this protein is Acetyl esterase.